Reading from the N-terminus, the 538-residue chain is Adenine deaminase (538 aa).

The protein belongs to the metallo-dependent hydrolases superfamily. Adenine deaminase family. Mn(2+) serves as cofactor.

The catalysed reaction is adenine + H2O + H(+) = hypoxanthine + NH4(+). This Methanothermobacter thermautotrophicus (strain ATCC 29096 / DSM 1053 / JCM 10044 / NBRC 100330 / Delta H) (Methanobacterium thermoautotrophicum) protein is Adenine deaminase.